A 357-amino-acid chain; its full sequence is Glutamine synthetase cytosolic isozyme 1-2 (357 aa).

One can recognise a GS beta-grasp domain in the interval 19-99 (IIAEYIWVGG…VMCDCYTPQG (81 aa)). Positions 106 to 357 (KRHSAAKIFS…AETTLLWKQN (252 aa)) constitute a GS catalytic domain.

This sequence belongs to the glutamine synthetase family. Homooctamer. As to expression, expressed in roots and at lower levels in leaf blades and spikelets (rice flower).

Its subcellular location is the cytoplasm. It carries out the reaction L-glutamate + NH4(+) + ATP = L-glutamine + ADP + phosphate + H(+). Its function is as follows. High-affinity glutamine synthetase involved in ammonium assimilation. Plays an important role in the primary assimilation of ammonium taken up by roots. Plays a role in maintaining nitrogen metabolic balance during ammonium assimilation, thus controlling plant growth and development. Reassimilates ammonium generated during lignification within developing tillers, which is probably required for the outgrowth of axillary buds. Required for nitrogen-dependent biosynthesis of cytokinin. Active cytokinin in axillary bud meristem is required for axillary bud outgrowth and necessary for tillering. This Oryza sativa subsp. japonica (Rice) protein is Glutamine synthetase cytosolic isozyme 1-2.